A 768-amino-acid chain; its full sequence is Photosystem I P700 chlorophyll a apoprotein A1 (768 aa).

A run of 8 helical transmembrane segments spans residues 76–99, 162–185, 201–225, 310–328, 369–392, 408–434, 456–478, and 559–577; these read VFSA…FHGA, LMAL…YHYH, LNHH…HIGA, ISHH…GHLY, WHAQ…HHMY, LGLF…IAMI, ALIS…LYIH, and FMIH…LILL. Residues Cys601 and Cys610 each coordinate [4Fe-4S] cluster. 2 helical membrane passes run 617 to 638 and 682 to 704; these read HVFL…HFSW and ISMY…MFLF. Residue His693 participates in divinylchlorophyll a' binding. 2 residues coordinate divinyl chlorophyll a: Met701 and Tyr709. Trp710 contributes to the phylloquinone binding site. A helical membrane pass occupies residues 742 to 762; that stretch reads AVGAAHFLLGGIATTWAFFHA.

Belongs to the PsaA/PsaB family. The PsaA/B heterodimer binds the P700 divinyl chlorophyll special pair and subsequent electron acceptors. PSI consists of a core antenna complex that captures photons, and an electron transfer chain that converts photonic excitation into a charge separation. The cyanobacterial PSI reaction center is composed of one copy each of PsaA,B,C,D,E,F,I,J,K,L,M and X, and forms trimeric complexes. PSI electron transfer chain: 5 divinyl chlorophyll a, 1 divinyl chlorophyll a', 2 phylloquinones and 3 4Fe-4S clusters. PSI core antenna: 90 divinyl chlorophyll a, 22 carotenoids, 3 phospholipids and 1 galactolipid. P700 is a divinyl chlorophyll a/divinyl chlorophyll a' dimer, A0 is one or more divinyl chlorophyll a, A1 is one or both phylloquinones and FX is a shared 4Fe-4S iron-sulfur center. is required as a cofactor.

It is found in the cellular thylakoid membrane. The catalysed reaction is reduced [plastocyanin] + hnu + oxidized [2Fe-2S]-[ferredoxin] = oxidized [plastocyanin] + reduced [2Fe-2S]-[ferredoxin]. Functionally, psaA and PsaB bind P700, the primary electron donor of photosystem I (PSI), as well as the electron acceptors A0, A1 and FX. PSI is a plastocyanin/cytochrome c6-ferredoxin oxidoreductase, converting photonic excitation into a charge separation, which transfers an electron from the donor P700 chlorophyll pair to the spectroscopically characterized acceptors A0, A1, FX, FA and FB in turn. Oxidized P700 is reduced on the lumenal side of the thylakoid membrane by plastocyanin or cytochrome c6. In Prochlorococcus marinus (strain NATL1A), this protein is Photosystem I P700 chlorophyll a apoprotein A1.